The following is a 753-amino-acid chain: 5-methyltetrahydropteroyltriglutamate--homocysteine methyltransferase (753 aa).

5-methyltetrahydropteroyltri-L-glutamate-binding positions include 17–20 and Lys117; that span reads RELK. L-homocysteine is bound by residues 431–433 and Glu484; that span reads IGS. Residues 431–433 and Glu484 contribute to the L-methionine site; that span reads IGS. Residues 515-516 and Trp561 contribute to the 5-methyltetrahydropteroyltri-L-glutamate site; that span reads RC. Asp599 serves as a coordination point for L-homocysteine. Asp599 lines the L-methionine pocket. Glu605 is a 5-methyltetrahydropteroyltri-L-glutamate binding site. His641, Cys643, and Glu665 together coordinate Zn(2+). His694 acts as the Proton donor in catalysis. Cys726 serves as a coordination point for Zn(2+).

This sequence belongs to the vitamin-B12 independent methionine synthase family. It depends on Zn(2+) as a cofactor.

It carries out the reaction 5-methyltetrahydropteroyltri-L-glutamate + L-homocysteine = tetrahydropteroyltri-L-glutamate + L-methionine. It functions in the pathway amino-acid biosynthesis; L-methionine biosynthesis via de novo pathway; L-methionine from L-homocysteine (MetE route): step 1/1. Its function is as follows. Catalyzes the transfer of a methyl group from 5-methyltetrahydrofolate to homocysteine resulting in methionine formation. This chain is 5-methyltetrahydropteroyltriglutamate--homocysteine methyltransferase, found in Cronobacter sakazakii (strain ATCC BAA-894) (Enterobacter sakazakii).